The sequence spans 484 residues: CUGBP Elav-like family member 2 (484 aa).

2 necessary for nuclear export regions span residues 1–89 (MNGA…PGMH) and 90–178 (HPIQ…EGCS). 3 consecutive RRM domains span residues 16 to 99 (IKTF…PADS), 108 to 188 (RKLF…FADT), and 399 to 477 (ANLF…LKRS). The segment at 188-240 (TQKDKEQRRLQQQLAQQMQQLNTATWGNLTGLGGLTPQYLALLQQATSSSNLG) is necessary for splicing activity. Residues 347–399 (GLTNGTAGTMDALTQAYSGIQQYAAAALPTLYSQSLLQQQSAAGSQKEGPEGA) are necessary for nuclear localization. The tract at residues 426–484 (ISAKVFIDKQTNLSKCFGFVSYDNPVSAQAAIQAMNGFQIGMKRLKVQLKRSKNDSKPY) is necessary for nuclear localization and splicing activity.

Belongs to the CELF/BRUNOL family. Expressed in heart.

The protein localises to the nucleus. The protein resides in the cytoplasm. Its function is as follows. RNA-binding protein implicated in the regulation of several post-transcriptional events. May be involved in mRNA translation repression and stability. Mediates exon inclusion in TNNT2 pre-mRNA. This Gallus gallus (Chicken) protein is CUGBP Elav-like family member 2 (CELF2).